A 486-amino-acid chain; its full sequence is MSATGNKVFAPAIFFIAAREALEASLVIGILSGMLENLVVHTKSAEDLAAHDSLTESEKHEVEQKKRALVRKLRKIVLLGALTGLLIAFAIGAAFLAVFYTQVNDLYGKAEELWEGIFNLVAVLLITPMSLAILRAGNSKRKWKRKLENAFSHQNIQPNHRRDEEGEATVVNANHSDDSASASSSSARQAAEEEAGTKTTRTEKLNPLEAVDVVPSMSGDQRRKRGGLRGLFSKPSGAVNDLKLRMNRGTLALFTIPLITTLREGLEGVVFIGGVSLGLPATSIPLPAIVGLAVGLGIGFLIFRSGNLVSVRIFLVFSTCFLLLIASGMASRSVYYLQFYAYVQLVGDSAAESGDGPGSYNSQGYIWHFNCCNPEANKGGTGWGILNSLVGWNNTATYGSVFMYIGYWFAVAGYLWYQIWSEGRLALRFGGKTYWESNRSIQARQRKQEKAHQRQLREADQEEHGHSSNSDKQQHPSEAGPSTLSH.

Transmembrane regions (helical) follow at residues 76–96 (IVLL…AAFL) and 113–133 (LWEG…SLAI). Asparagine 174 is a glycosylation site (N-linked (GlcNAc...) asparagine). Positions 175 to 209 (HSDDSASASSSSARQAAEEEAGTKTTRTEKLNPLE) are disordered. Residues 179-189 (SASASSSSARQ) are compositionally biased toward low complexity. 3 helical membrane passes run 252 to 272 (ALFT…VVFI), 283 to 303 (SIPL…FLIF), and 308 to 328 (LVSV…IASG). Asparagine 393 carries an N-linked (GlcNAc...) asparagine glycan. A helical membrane pass occupies residues 400–420 (SVFMYIGYWFAVAGYLWYQIW). Asparagine 438 is a glycosylation site (N-linked (GlcNAc...) asparagine). Residues 441 to 486 (IQARQRKQEKAHQRQLREADQEEHGHSSNSDKQQHPSEAGPSTLSH) are disordered. Residues 446-466 (RKQEKAHQRQLREADQEEHGH) show a composition bias toward basic and acidic residues.

Belongs to the oxidase-dependent Fe transporter (OFeT) (TC 9.A.10.1) family.

It localises to the cell membrane. Its function is as follows. Permease for high affinity iron uptake. In Mycosarcoma maydis (Corn smut fungus), this protein is High-affinity iron permease fer2.